The sequence spans 551 residues: Sodium-dependent high-affinity dicarboxylate transporter 2 (551 aa).

The next 10 membrane-spanning stretches (helical) occupy residues 9 to 29 (LIKK…LFFG), 34 to 54 (CLFS…PIGV), 82 to 102 (SIVL…TGLH), 119 to 139 (VMLL…SDTA), 194 to 214 (FCKA…TAII), 243 to 263 (WMVF…IILV), 347 to 367 (VSGV…FDPI), 417 to 437 (IFVG…IVIM), 449 to 469 (IFIP…LYLA), and 497 to 517 (VISM…CILI).

The protein belongs to the SLC13A/DASS transporter (TC 2.A.47) family. NADC subfamily.

It is found in the membrane. High-affinity sodium-dicarboxylate cotransporter that accepts a range of tricarboxylic acid-cycle intermediates with 4-5 carbon atoms. There is no interaction with monocarboxylates. This is Sodium-dependent high-affinity dicarboxylate transporter 2 (nac-2) from Caenorhabditis elegans.